Here is a 150-residue protein sequence, read N- to C-terminus: Cdc42 effector protein 5 (150 aa).

3 disordered regions span residues 1-20 (MPVMKQLGPAQPKKRLDRGA), 34-89 (LHVG…PADP), and 114-133 (SETTATKPDGDAHPRVQHPK). One can recognise a CRIB domain in the interval 23–37 (ISAPLGDFRHTLHVG). Residue Arg38 is modified to Omega-N-methylarginine. Pro residues-rich tracts occupy residues 55–66 (GPPPEPGAPPVV) and 74–87 (PAAPQPPVAVPSPA). Positions 114 to 127 (SETTATKPDGDAHP) are enriched in basic and acidic residues.

Belongs to the BORG/CEP family. As to quaternary structure, interacts with CDC42 in a GTP-dependent manner, and with SEPT7. Highly expressed in the skeletal muscle.

It localises to the endomembrane system. It is found in the cytoplasm. Its subcellular location is the cytoskeleton. Probably involved in the organization of the actin cytoskeleton. May act downstream of CDC42 to induce actin filament assembly leading to cell shape changes. Induces pseudopodia formation in fibroblasts. Inhibits MAPK8 independently of CDC42 binding. Controls septin organization and this effect is negatively regulated by CDC42. The chain is Cdc42 effector protein 5 (Cdc42ep5) from Mus musculus (Mouse).